A 92-amino-acid chain; its full sequence is Bombyxin A-6 (92 aa).

Residues 1-19 (MKILLAIALMLSTVMWVST) form the signal peptide. Q20 bears the Pyrrolidone carboxylic acid mark. Intrachain disulfides connect C29–C79, C41–C92, and C78–C83. Residues 50 to 70 (SGAQFASYGSAWLMPYSEGRG) constitute a propeptide, c peptide like.

The protein belongs to the insulin family. As to quaternary structure, heterodimer of a B chain and an A chain linked by two disulfide bonds.

It localises to the secreted. Brain peptide responsible for activation of prothoracic glands to produce ecdysone in insects. In Bombyx mori (Silk moth), this protein is Bombyxin A-6 (BBXA6).